A 356-amino-acid chain; its full sequence is Alanine racemase, catabolic (356 aa).

Catalysis depends on Lys-35, which acts as the Proton acceptor; specific for D-alanine. Residue Lys-35 is modified to N6-(pyridoxal phosphate)lysine. Arg-130 contributes to the substrate binding site. Residue Tyr-253 is the Proton acceptor; specific for L-alanine of the active site. Residue Met-301 participates in substrate binding.

This sequence belongs to the alanine racemase family. Pyridoxal 5'-phosphate serves as cofactor.

The catalysed reaction is L-alanine = D-alanine. In terms of biological role, isomerizes L-alanine to D-alanine which is then oxidized to pyruvate by DadA. This Escherichia coli (strain K12) protein is Alanine racemase, catabolic (dadX).